A 706-amino-acid chain; its full sequence is MFKVFKKEIAGRVLEVEVGKLAQLSNGSCLLKYGQTAVLVNACASKSPREGIDFFPLSVDYEEKMYAAGKIPGGFIKREGRPSENAILTSRLIDRPIRPLFPDGYRNDVQIIATVLSVDIDCTPDIVAMLGSSIALSISDIPFQGPTASVHVGLVDGKLLINPTSDEREHSSLDLVVSGTKDAVMMIEAGANEVTEAQMLEAILFAHEEIKNIISFIEEIAAEVGKEKQEVVTLEINEDFETEVRAYAKTRISEAIRTVEKLERNAKIELANEETINYFYEKYQEELNLKQIHTILDSILKEETRNLILYDKKRPDDRQHDEIRPISCEVDLLPKTHGSGLFTRGQTQVLSIVTLGAIGDVQILDGLGKEESKRYMHHYNFPPYSVGETKMLRSPGRREIGHGALAERALEPMIPSQDDFPYAIRVVSEVLASNGSSSQASVCGSTLSLLDAGVPLKDMVAGIAMGLVKEGDAVAILSDIQGMEDHLGDMDFKVAGTAKGITAIQMDIKIKGIDEPILKDALEQARVGRLYILDKMKEAISSPRPELSPYAPRMLKMKIHPDKIREVIGSGGKTINKIIEDTGVKIDIENDGTIFIAAQTQEAGELALSIINNIVREPEIGDIFKGKVIKLMNFGAFVEILPGKEGLVHISNLAHERVNKVEDVLAVGDEIDVKVIEIDQQGKVSLSRKALLPKDNDKKQDDPQKA.

2 residues coordinate Mg(2+): Asp485 and Asp491. In terms of domain architecture, KH spans 552–611; that stretch reads PRMLKMKIHPDKIREVIGSGGKTINKIIEDTGVKIDIENDGTIFIAAQTQEAGELALSII. The region spanning 621 to 689 is the S1 motif domain; that stretch reads GDIFKGKVIK…QQGKVSLSRK (69 aa).

Belongs to the polyribonucleotide nucleotidyltransferase family. The cofactor is Mg(2+).

It is found in the cytoplasm. The catalysed reaction is RNA(n+1) + phosphate = RNA(n) + a ribonucleoside 5'-diphosphate. Its function is as follows. Involved in mRNA degradation. Catalyzes the phosphorolysis of single-stranded polyribonucleotides processively in the 3'- to 5'-direction. The sequence is that of Polyribonucleotide nucleotidyltransferase from Alkaliphilus oremlandii (strain OhILAs) (Clostridium oremlandii (strain OhILAs)).